Consider the following 151-residue polypeptide: Deoxyuridine 5'-triphosphate nucleotidohydrolase (151 aa).

Residues 70 to 72 (RSG), Asn-83, and 87 to 89 (TID) contribute to the substrate site.

The protein belongs to the dUTPase family. Mg(2+) is required as a cofactor.

It carries out the reaction dUTP + H2O = dUMP + diphosphate + H(+). It participates in pyrimidine metabolism; dUMP biosynthesis; dUMP from dCTP (dUTP route): step 2/2. Functionally, this enzyme is involved in nucleotide metabolism: it produces dUMP, the immediate precursor of thymidine nucleotides and it decreases the intracellular concentration of dUTP so that uracil cannot be incorporated into DNA. This chain is Deoxyuridine 5'-triphosphate nucleotidohydrolase, found in Ruegeria pomeroyi (strain ATCC 700808 / DSM 15171 / DSS-3) (Silicibacter pomeroyi).